The sequence spans 42 residues: Photosystem I reaction center subunit IX (42 aa).

Residues 8–28 form a helical membrane-spanning segment; the sequence is YLSTAPVIGVLWMTFTAGFII.

The protein belongs to the PsaJ family.

It localises to the plastid. The protein resides in the chloroplast thylakoid membrane. Functionally, may help in the organization of the PsaE and PsaF subunits. This chain is Photosystem I reaction center subunit IX, found in Pyropia yezoensis (Susabi-nori).